Consider the following 551-residue polypeptide: Sodium-dependent high-affinity dicarboxylate transporter 2 (551 aa).

Helical transmembrane passes span 9–29 (LIKKLLVLLGPLVAVPLLFFG), 34–54 (CLFSIIFLSTYWIGEAFPIGV), 82–102 (SIVLFMCTLIMAMAVEATGLH), 119–139 (VMLLGFMCITSFISFFVSDTA), 194–214 (FCKALILACAHASLIGGTAII), 243–263 (WMVFAIPPMFVYLLASYIILV), 347–367 (VSGVLISCILFVWPKDPFDPI), 417–437 (IFVGMSSLPLQLTVTTIIVIM), 449–469 (IFIPISLGVAESMGVHPLYLA), and 497–517 (VISMVEMIVCGFLLNIACILI).

Belongs to the SLC13A/DASS transporter (TC 2.A.47) family. NADC subfamily.

The protein resides in the membrane. High-affinity sodium-dicarboxylate cotransporter that accepts a range of tricarboxylic acid-cycle intermediates with 4-5 carbon atoms. There is no interaction with monocarboxylates. The chain is Sodium-dependent high-affinity dicarboxylate transporter 2 (nac-2) from Caenorhabditis elegans.